The chain runs to 291 residues: 4-diphosphocytidyl-2-C-methyl-D-erythritol kinase (291 aa).

The active site involves Lys10. Residue 94 to 104 (PVSAGLAGGSS) participates in ATP binding. The active site involves Asp136.

It belongs to the GHMP kinase family. IspE subfamily.

The enzyme catalyses 4-CDP-2-C-methyl-D-erythritol + ATP = 4-CDP-2-C-methyl-D-erythritol 2-phosphate + ADP + H(+). It functions in the pathway isoprenoid biosynthesis; isopentenyl diphosphate biosynthesis via DXP pathway; isopentenyl diphosphate from 1-deoxy-D-xylulose 5-phosphate: step 3/6. In terms of biological role, catalyzes the phosphorylation of the position 2 hydroxy group of 4-diphosphocytidyl-2C-methyl-D-erythritol. The protein is 4-diphosphocytidyl-2-C-methyl-D-erythritol kinase of Listeria innocua serovar 6a (strain ATCC BAA-680 / CLIP 11262).